The chain runs to 121 residues: Glycine cleavage system H protein (121 aa).

One can recognise a Lipoyl-binding domain in the interval 16 to 98 (VATIGITAHA…EAGGWFAKVR (83 aa)). K57 bears the N6-lipoyllysine mark.

This sequence belongs to the GcvH family. The glycine cleavage system is composed of four proteins: P, T, L and H. (R)-lipoate serves as cofactor.

In terms of biological role, the glycine cleavage system catalyzes the degradation of glycine. The H protein shuttles the methylamine group of glycine from the P protein to the T protein. The polypeptide is Glycine cleavage system H protein (Phenylobacterium zucineum (strain HLK1)).